A 219-amino-acid polypeptide reads, in one-letter code: NAD(P)H-quinone oxidoreductase subunit I (219 aa).

4Fe-4S ferredoxin-type domains follow at residues 55–84 (GRIHYEFDKCIACEVCVRVCPINLPVVDWV) and 95–124 (RNYSIDFGVCIFCGNCVEYCPTNCLSMTEE). Residues Cys-64, Cys-67, Cys-70, Cys-74, Cys-104, Cys-107, Cys-110, and Cys-114 each coordinate [4Fe-4S] cluster. A disordered region spans residues 192 to 219 (LKAAGSMKAAEDERESSSSASNMEESAG). The segment covering 208 to 219 (SSSASNMEESAG) has biased composition (low complexity).

The protein belongs to the complex I 23 kDa subunit family. NDH-1 is composed of at least 11 different subunits. Requires [4Fe-4S] cluster as cofactor.

Its subcellular location is the cellular thylakoid membrane. It carries out the reaction a plastoquinone + NADH + (n+1) H(+)(in) = a plastoquinol + NAD(+) + n H(+)(out). The enzyme catalyses a plastoquinone + NADPH + (n+1) H(+)(in) = a plastoquinol + NADP(+) + n H(+)(out). Its function is as follows. NDH-1 shuttles electrons from an unknown electron donor, via FMN and iron-sulfur (Fe-S) centers, to quinones in the respiratory and/or the photosynthetic chain. The immediate electron acceptor for the enzyme in this species is believed to be plastoquinone. Couples the redox reaction to proton translocation, and thus conserves the redox energy in a proton gradient. In Synechococcus sp. (strain CC9311), this protein is NAD(P)H-quinone oxidoreductase subunit I.